A 432-amino-acid polypeptide reads, in one-letter code: Repulsive guidance molecule A (432 aa).

A signal peptide spans 1–29 (MGRGAGSTALGLFQILPVFLCIFPPVTSP). Residues 30-149 (CKILKCNSEF…NYTHCGLFGD (120 aa)) constitute a propeptide, removed in mature form. An N-linked (GlcNAc...) asparagine glycan is attached at Asn96. Residues 99-122 (KDGPTSQPRLRTLPPGDSQERSDS) are disordered. Intrachain disulfides connect Cys126/Cys207 and Cys144/Cys296. Asn140 is a glycosylation site (N-linked (GlcNAc...) asparagine). Residue Asn404 is the site of GPI-anchor amidated asparagine attachment. The propeptide at 405–432 (AAPSEHPWALPALWVALLSLSQCWLGLL) is removed in mature form.

This sequence belongs to the repulsive guidance molecule (RGM) family. Autocatalytically cleaved at low pH; the two chains remain linked via two disulfide bonds.

Its subcellular location is the cell membrane. Its function is as follows. Acts as an axon-specific repulsive guidance molecule in the retinotectal system. Repulsive for a subset of axons of the temporal half of the retina. Provides thus positional information for the temporal axons invading the optic tectum in the stratum opticum. The polypeptide is Repulsive guidance molecule A (RGMA) (Gallus gallus (Chicken)).